The following is a 453-amino-acid chain: Putative F-box/FBD/LRR-repeat protein At1g66290 (453 aa).

The segment at 1–28 is disordered; it reads MDEDGERRVRTKRSCSPESSDNGSGDEV. Residues 14-23 show a composition bias toward polar residues; sequence SCSPESSDNG. Residues 28 to 81 form the F-box domain; that stretch reads VDWISDLPEALIVLVLLNLPTKDVIKTSVLSTKWRNIWRYVPRLDLDNRHFTEF. LRR repeat units lie at residues 155-179, 210-235, 246-269, 305-329, and 358-381; these read SLKL…VLVL, LDNV…SSKS, APKL…NLSS, LSRV…RCEP, and CSNL…IISE. One can recognise an FBD domain in the interval 373–423; sequence RKRTSIISEPRCLLSSLEYVKIEFALDKGKMELVRYLLENSPILKKLTLSL.

The chain is Putative F-box/FBD/LRR-repeat protein At1g66290 from Arabidopsis thaliana (Mouse-ear cress).